The chain runs to 290 residues: MALWIAALLGVIQGIFMFLPVSSTAHMVLTEHWLIARGETLPPPESAEMILFALVVHVGTLVSIAVVFWPSLWRFSLNALGGAWEWAGRGGRGGLPLYWRLFWLGMFSVLCTGVLGLTLKATFEHVFASPLMIAGTLTLTGILLWWTDRLAPRRRGLKGINLKVAGVIGLAQGFALMPGLSRSAMTIVFALFTGLKRRWAAEYSFFLAIPTICAATLLQAIEVYRLGLPNTVGFSALAVGFVVAAIVGIISLKLVIYFLYRARLKVFSFYVWALALGIATGLIDLAPALG.

The next 8 membrane-spanning stretches (helical) occupy residues M1–V21, M49–W69, L101–A121, V126–W146, I160–L180, Y203–V223, V232–L252, and V266–A286.

It belongs to the UppP family.

It localises to the cell inner membrane. The catalysed reaction is di-trans,octa-cis-undecaprenyl diphosphate + H2O = di-trans,octa-cis-undecaprenyl phosphate + phosphate + H(+). Catalyzes the dephosphorylation of undecaprenyl diphosphate (UPP). Confers resistance to bacitracin. The chain is Undecaprenyl-diphosphatase from Alkalilimnicola ehrlichii (strain ATCC BAA-1101 / DSM 17681 / MLHE-1).